Reading from the N-terminus, the 277-residue chain is Adenylate kinase (277 aa).

53–58 (GAGKGT) is an ATP binding site. Residues 73–102 (ATGDMLRAQVAAKTPLGREAKKIMDAGGLV) are NMP. Residues T74, R79, 100-102 (GLV), 129-132 (GFPR), and Q136 each bind AMP. The tract at residues 170–207 (GRLVHPASGRSYHKIFNPPKAPMTDDATGEPLIQRSDD) is LID. Residues R171 and 180–181 (SY) contribute to the ATP site. R204 and R215 together coordinate AMP. Q243 is an ATP binding site.

It belongs to the adenylate kinase family. AK2 subfamily. In terms of assembly, monomer.

It is found in the cytoplasm. The protein resides in the cytosol. Its subcellular location is the mitochondrion intermembrane space. The enzyme catalyses AMP + ATP = 2 ADP. Its function is as follows. Catalyzes the reversible transfer of the terminal phosphate group between ATP and AMP. Plays an important role in cellular energy homeostasis and in adenine nucleotide metabolism. Adenylate kinase activity is critical for regulation of the phosphate utilization and the AMP de novo biosynthesis pathways. This Phaeosphaeria nodorum (strain SN15 / ATCC MYA-4574 / FGSC 10173) (Glume blotch fungus) protein is Adenylate kinase.